The primary structure comprises 488 residues: Coiled-coil domain-containing protein 77 (488 aa).

The interval 21–48 (GVAVSGPTKRRGMADSLESTPLPSPEDR) is disordered. Position 36 is a phosphoserine (S36). A Glycyl lysine isopeptide (Lys-Gly) (interchain with G-Cter in SUMO2) cross-link involves residue K51. 2 coiled-coil regions span residues 55–118 (SKEL…QVCL) and 208–488 (KESS…LRLC). The segment at 192–213 (FKADPKISKRRPSRERKESSEH) is disordered.

This chain is Coiled-coil domain-containing protein 77 (CCDC77), found in Homo sapiens (Human).